The sequence spans 388 residues: Succinate--CoA ligase [ADP-forming] subunit beta (388 aa).

The region spanning Lys-9–Lys-236 is the ATP-grasp domain. ATP contacts are provided by residues Lys-45, Gly-52–Gly-54, Glu-91, Ser-94, and Glu-99. Mg(2+) is bound by residues Asn-191 and Asp-205. Substrate contacts are provided by residues Asn-256 and Gly-318–Thr-320.

Belongs to the succinate/malate CoA ligase beta subunit family. As to quaternary structure, heterotetramer of two alpha and two beta subunits. Mg(2+) is required as a cofactor.

The enzyme catalyses succinate + ATP + CoA = succinyl-CoA + ADP + phosphate. It catalyses the reaction GTP + succinate + CoA = succinyl-CoA + GDP + phosphate. The protein operates within carbohydrate metabolism; tricarboxylic acid cycle; succinate from succinyl-CoA (ligase route): step 1/1. Succinyl-CoA synthetase functions in the citric acid cycle (TCA), coupling the hydrolysis of succinyl-CoA to the synthesis of either ATP or GTP and thus represents the only step of substrate-level phosphorylation in the TCA. The beta subunit provides nucleotide specificity of the enzyme and binds the substrate succinate, while the binding sites for coenzyme A and phosphate are found in the alpha subunit. This Frankia casuarinae (strain DSM 45818 / CECT 9043 / HFP020203 / CcI3) protein is Succinate--CoA ligase [ADP-forming] subunit beta.